Consider the following 378-residue polypeptide: Putative F-box only protein 15 (378 aa).

In terms of domain architecture, F-box spans 5 to 52; that stretch reads KRVYRSLPFELVEEILKKTPAESLNRFKSTCKQWYGIITSKRFMYNHL.

This chain is Putative F-box only protein 15 (FBX15), found in Arabidopsis thaliana (Mouse-ear cress).